The primary structure comprises 374 residues: Anhydro-N-acetylmuramic acid kinase (374 aa).

Residue 12 to 19 (GTSLDGVD) participates in ATP binding.

This sequence belongs to the anhydro-N-acetylmuramic acid kinase family.

It carries out the reaction 1,6-anhydro-N-acetyl-beta-muramate + ATP + H2O = N-acetyl-D-muramate 6-phosphate + ADP + H(+). It participates in amino-sugar metabolism; 1,6-anhydro-N-acetylmuramate degradation. It functions in the pathway cell wall biogenesis; peptidoglycan recycling. Functionally, catalyzes the specific phosphorylation of 1,6-anhydro-N-acetylmuramic acid (anhMurNAc) with the simultaneous cleavage of the 1,6-anhydro ring, generating MurNAc-6-P. Is required for the utilization of anhMurNAc either imported from the medium or derived from its own cell wall murein, and thus plays a role in cell wall recycling. The protein is Anhydro-N-acetylmuramic acid kinase of Escherichia fergusonii (strain ATCC 35469 / DSM 13698 / CCUG 18766 / IAM 14443 / JCM 21226 / LMG 7866 / NBRC 102419 / NCTC 12128 / CDC 0568-73).